The following is a 336-amino-acid chain: MQKNLTRWLLTCCIMVVAMIIVGGITRLTDSGLSIVEWRPVTGILPPFSYDTWQAEFAKYKAFPEYNAVNYGMTLSEFKFIYLLEFVHRLLGRATGLIYILPLIYFYFKGIIKNRDILSYIIVLLLFCVQGFMGWYMVKSGLVNHPSVSHFRLAFHLIIAVIIYHLLFYKLVKNCCDILLIPSQINLKLPLIFSVAAIAMIYVQIFLGALVAGLDAGLIYNSFPLMGGNFIPIEIKDNFISFKNWYDPVFVQFIHRLGAYSLSIIVIALIISLLKVKNPKLNKVAFYLSIALLIQLSTGVITLLYHVPIIAASMHQFFAIVLLSVVIWCYSLIKNS.

8 consecutive transmembrane segments (helical) span residues 5-25 (LTRW…VGGI), 92-112 (GRAT…KGII), 117-137 (ILSY…GWYM), 153-173 (LAFH…KLVK), 191-211 (LIFS…GALV), 253-273 (FIHR…IISL), 284-304 (VAFY…ITLL), and 307-327 (VPII…SVVI). H255 contributes to the heme binding site. H315 provides a ligand contact to heme.

Belongs to the COX15/CtaA family. Type 2 subfamily. Interacts with CtaB. Requires heme b as cofactor.

It localises to the cell membrane. It carries out the reaction Fe(II)-heme o + 2 A + H2O = Fe(II)-heme a + 2 AH2. It participates in porphyrin-containing compound metabolism; heme A biosynthesis; heme A from heme O: step 1/1. Its function is as follows. Catalyzes the conversion of heme O to heme A by two successive hydroxylations of the methyl group at C8. The first hydroxylation forms heme I, the second hydroxylation results in an unstable dihydroxymethyl group, which spontaneously dehydrates, resulting in the formyl group of heme A. The sequence is that of Heme A synthase from Rickettsia bellii (strain RML369-C).